The primary structure comprises 643 residues: 1-deoxy-D-xylulose-5-phosphate synthase (643 aa).

Residues H79 and 120 to 122 (AHA) contribute to the thiamine diphosphate site. Residue D151 participates in Mg(2+) binding. Thiamine diphosphate contacts are provided by residues 152-153 (GS), N180, Y287, and E369. A Mg(2+)-binding site is contributed by N180.

The protein belongs to the transketolase family. DXPS subfamily. In terms of assembly, homodimer. It depends on Mg(2+) as a cofactor. Thiamine diphosphate is required as a cofactor.

The catalysed reaction is D-glyceraldehyde 3-phosphate + pyruvate + H(+) = 1-deoxy-D-xylulose 5-phosphate + CO2. It participates in metabolic intermediate biosynthesis; 1-deoxy-D-xylulose 5-phosphate biosynthesis; 1-deoxy-D-xylulose 5-phosphate from D-glyceraldehyde 3-phosphate and pyruvate: step 1/1. Catalyzes the acyloin condensation reaction between C atoms 2 and 3 of pyruvate and glyceraldehyde 3-phosphate to yield 1-deoxy-D-xylulose-5-phosphate (DXP). The sequence is that of 1-deoxy-D-xylulose-5-phosphate synthase from Maricaulis maris (strain MCS10) (Caulobacter maris).